A 445-amino-acid polypeptide reads, in one-letter code: Trigger factor (445 aa).

The PPIase FKBP-type domain occupies 172–257 (GDQVVIDFVG…VKSVNWAHMP (86 aa)).

This sequence belongs to the FKBP-type PPIase family. Tig subfamily.

The protein localises to the cytoplasm. It carries out the reaction [protein]-peptidylproline (omega=180) = [protein]-peptidylproline (omega=0). In terms of biological role, involved in protein export. Acts as a chaperone by maintaining the newly synthesized protein in an open conformation. Functions as a peptidyl-prolyl cis-trans isomerase. This chain is Trigger factor, found in Polynucleobacter asymbioticus (strain DSM 18221 / CIP 109841 / QLW-P1DMWA-1) (Polynucleobacter necessarius subsp. asymbioticus).